The primary structure comprises 826 residues: MKVNHTTACGTQPFDKTYSLGYQVHHEDWSPYPRVNRLRQAFLDRPYDIDVERLRLVTEAYQKHEDAPRKLKCARAFENILLNTKLYIYDEDLILGEIAAPAKASPIYPEFSVNWIINEILHSPFEERANDQFYIRNDEERKEIVELCRYWEGKTVDDLINSRLEIDQTKGSEVGEKIFQTNLYHYAGAGHLAIDYARLMAVGYNGLIDNAQAGLEKLSKRDPEYGDKRDFYTAMIIELEAAKKYIARYAKLAQESAEKEENPQRKQELETMALNCQQIAGGVPQTFWQALQLFNFATTLIQIESNGHSISYGRMDQWLYPWFAADMKNNTITKEFALELIEVQYVKMNNPTKLKDKGTVAVRNGRGFGGESLTLGGVDREGNDATNDLTMLMLEGSAHTRMMNPWVCVRMHENTPYELKIKTVECIRAGYGHPKLFNDAPSIKGMMRKGMTLEEARDYCVVGCVELDLAGKEYGWHDAAYVNTPKMMEMVVNGGRSLSTGEQLGPDTGSLDTYKSFDEVLASVDQQFEYWTDQMCSSLNIIDNAHRELKPVPYVSAFYEDCMISGKDLTEGGAKYNGIAPQAAGMATCADSLATIKQLVFDEKRYSGAEMLQAVKDNWVGHEKLYALVNSSKVRHYGNDDDYADDLFKFMFECYCRHISGRKTPRGGEFSPGVYSVNANVGMGLNTNASIDGRKKFEPISDNMGPVHTDGGSHDICGPTALVNSLTKVDHSLATNGTLMNLRFPQEAVAGVEGRDNLLSFIDEYIAKQAMHVQFNIMSSATMRAAQKKPEDYKDMLVRVAGYSAYFVELGKPLQKDLIQRTELHF.

In terms of domain architecture, PFL spans 33 to 695 (PRVNRLRQAF…NTNASIDGRK (663 aa)). C464 (cysteine radical intermediate) is an active-site residue. Catalysis depends on E466, which acts as the Proton acceptor. Residues 706 to 826 (PVHTDGGSHD…DLIQRTELHF (121 aa)) enclose the Glycine radical domain. At G802 the chain carries Glycine radical.

The protein belongs to the glycyl radical enzyme (GRE) family. In terms of processing, requires the activating protein HpfH to generate the key active site glycyl radical on Gly-802 that is involved in catalysis.

The catalysed reaction is (2S)-3-sulfopropanediol = 3-oxopropane-1-sulfonate + H2O. It participates in organosulfur degradation; alkanesulfonate degradation. Involved in the degradation of the organosulfur compound 2(S)-dihydroxypropanesulfonate (DHPS). Catalyzes the radical-mediated dehydration of DHPS to produce 3-sulfopropionaldehyde (3-oxopropane-1-sulfonate). This Klebsiella oxytoca protein is (2S)-3-sulfopropanediol dehydratase.